Consider the following 397-residue polypeptide: Elongation factor Tu (397 aa).

In terms of domain architecture, tr-type G spans 10-206 (KPHVNIGTIG…AVDSYIPTPE (197 aa)). The tract at residues 19–26 (GHVDHGKT) is G1. 19–26 (GHVDHGKT) contacts GTP. Residue T26 coordinates Mg(2+). Residues 60-64 (GITIN) form a G2 region. The interval 81–84 (DCPG) is G3. Residues 81–85 (DCPGH) and 136–139 (NKAD) contribute to the GTP site. The interval 136-139 (NKAD) is G4. The segment at 174 to 176 (SAL) is G5.

This sequence belongs to the TRAFAC class translation factor GTPase superfamily. Classic translation factor GTPase family. EF-Tu/EF-1A subfamily. In terms of assembly, monomer.

The protein localises to the cytoplasm. It carries out the reaction GTP + H2O = GDP + phosphate + H(+). Functionally, GTP hydrolase that promotes the GTP-dependent binding of aminoacyl-tRNA to the A-site of ribosomes during protein biosynthesis. This Clostridium beijerinckii (strain ATCC 51743 / NCIMB 8052) (Clostridium acetobutylicum) protein is Elongation factor Tu.